The primary structure comprises 602 residues: mRNA-decapping enzyme 1A (602 aa).

A Phosphoserine modification is found at Ser-82. The segment covering 152–161 (RSQQAARDKQ) has biased composition (basic and acidic residues). Disordered stretches follow at residues 152-174 (RSQQAARDKQSPSQANGCSDQRP), 191-234 (NQMG…PSGH), and 267-291 (GDASQKEPSSFLPFPFEQSGGAPQS). A phosphoserine mark is found at Ser-162, Ser-199, and Ser-200. A compositionally biased stretch (polar residues) spans 193 to 229 (MGGSNISSPGLQPSTQLSNLGSTETLEETPSGSQDKS). Residues Ser-335 and Ser-339 each carry the phosphoserine modification. Thr-367 bears the Phosphothreonine mark. Ser-372 is modified (phosphoserine). At Arg-395 the chain carries Asymmetric dimethylarginine. Thr-420 carries the post-translational modification Phosphothreonine. Residues Ser-441, Ser-542, Ser-543, and Ser-545 each carry the phosphoserine modification. Thr-548 and Thr-551 each carry phosphothreonine.

This sequence belongs to the DCP1 family. Forms a complex with EDC3, DCP2, DDX6 and EDC4/HEDLS, within this complex directly interacts with EDC3. Part of a cytoplasmic complex containing proteins involved in mRNA decay, including XRN1 and LSM1. Interacts with DCP1B. Interacts with DCP2. Interacts with DDX17 in an RNA-independent manner. Interacts with PNRC2. Interacts with SMAD4. Interacts with UPF1. Interacts with ZC3HAV1. Interacts with ZFP36L1. Interacts with NBDY. Interacts with DHX34; the interaction is RNA-independent. In terms of tissue distribution, ubiquitous, with highest expression in the spleen and testis (at protein level).

It is found in the cytoplasm. It localises to the P-body. The protein resides in the nucleus. The enzyme catalyses a 5'-end (N(7)-methyl 5'-triphosphoguanosine)-ribonucleoside in mRNA + H2O = N(7)-methyl-GDP + a 5'-end phospho-ribonucleoside in mRNA + 2 H(+). Necessary for the degradation of mRNAs, both in normal mRNA turnover and in nonsense-mediated mRNA decay. Removes the 7-methyl guanine cap structure from mRNA molecules, yielding a 5'-phosphorylated mRNA fragment and 7m-GDP. Contributes to the transactivation of target genes after stimulation by TGFB1. Essential for embryonic development. In Mus musculus (Mouse), this protein is mRNA-decapping enzyme 1A (Dcp1a).